A 291-amino-acid polypeptide reads, in one-letter code: Omega-amidase NIT3 (291 aa).

In terms of domain architecture, CN hydrolase spans 11-264 (IKVALVQLSG…EEIIYAELDP (254 aa)). Thr-34 is subject to Phosphothreonine. Glu-53 serves as the catalytic Proton acceptor. Lys-128 serves as the catalytic Proton donor. Cys-169 acts as the Nucleophile in catalysis.

This sequence belongs to the carbon-nitrogen hydrolase superfamily. NIT1/NIT2 family. Homodimer.

It catalyses the reaction a monoamide of a dicarboxylate + H2O = a dicarboxylate + NH4(+). Functionally, possesses omega-amidase activity. The role of omega-amidase is to remove potentially toxic intermediates by converting 2-oxoglutaramate and 2-oxosuccinamate to biologically useful 2-oxoglutarate and oxaloacetate, respectively. This Saccharomyces cerevisiae (strain ATCC 204508 / S288c) (Baker's yeast) protein is Omega-amidase NIT3 (NIT3).